Here is a 465-residue protein sequence, read N- to C-terminus: Protein unc-93 homolog A (465 aa).

A run of 5 helical transmembrane segments spans residues 8–28, 40–60, 71–91, 96–118, and 140–160; these read VLVVSFGFLLLFTAYGGLQSL, VISLSVIYAAIILSSMFLPPI, IVVSMGCYVAYSFGNLAPGWA, TSAILGMGGSPLWSAKCTYLTIS, and IFFFIFQSSGVWGNLMSSLIF. N-linked (GlcNAc...) asparagine glycosylation is found at Asn-183 and Asn-189. Residues 200 to 220 traverse the membrane as a helical segment; the sequence is TLLGCYIGVGLLAIIFVAVFL. An N-linked (GlcNAc...) asparagine glycan is attached at Asn-237. 5 helical membrane-spanning segments follow: residues 256–276, 281–301, 319–339, 343–363, and 410–427; these read LLLLIPLTMYSGFEQSFLSGE, YVTCALGIHNVGFVMICFAAS, IALFCLAAAINLGSFLGLLYW, PDQLAIFFVFPALWGMADAVW, and IYIALAVLALTMVTYLYV.

Belongs to the unc-93 family.

Its subcellular location is the membrane. This is Protein unc-93 homolog A (unc93a) from Danio rerio (Zebrafish).